A 507-amino-acid polypeptide reads, in one-letter code: Carnosic acid synthase (507 aa).

A helical membrane pass occupies residues 6–23 (VFSLAFLAAWFIVVFPRW). Cys450 contributes to the heme binding site.

This sequence belongs to the cytochrome P450 family. Heme is required as a cofactor. As to expression, expressed in glandular trichomes of young leaves.

The protein resides in the membrane. The catalysed reaction is 11-hydroxyferruginol + 3 reduced [NADPH--hemoprotein reductase] + 3 O2 = carnosate + 3 oxidized [NADPH--hemoprotein reductase] + 4 H2O + 4 H(+). It carries out the reaction miltiradiene + 2 reduced [NADPH--hemoprotein reductase] + 2 O2 = miltiradien-20-al + 2 oxidized [NADPH--hemoprotein reductase] + 3 H2O + 2 H(+). The enzyme catalyses ferruginol + 3 reduced [NADPH--hemoprotein reductase] + 3 O2 = pisiferate + 3 oxidized [NADPH--hemoprotein reductase] + 4 H2O + 4 H(+). Its pathway is secondary metabolite biosynthesis; terpenoid biosynthesis. Its function is as follows. Monooxygenase involved in the biosynthesis of carnosate, a potent antioxidant labdane-related diterpene natural product. Catalyzes the oxidation of 11-hydroxyferruginol to produce carnosate. Mediates the conversion of miltiradien into miltiradien-20-al. Also involved in the production of pisiferic acid and derivative products from ferruginol. The polypeptide is Carnosic acid synthase (Rosmarinus officinalis (Rosemary)).